The sequence spans 229 residues: C-&gt;U-editing enzyme APOBEC-1 (229 aa).

Residues Val10–Leu134 enclose the CMP/dCMP-type deaminase domain. Zn(2+) is bound at residue His61. Glu63 serves as the catalytic Proton donor. Zn(2+) contacts are provided by Cys93 and Cys96.

It belongs to the cytidine and deoxycytidylate deaminase family. In terms of assembly, homodimer. Interacts with A1CF; form an mRNA editing complex. Interacts with RBM47; form an mRNA editing complex. Found in a complex with CELF2/CUGBP2 and A1CF. Interacts with HNRPAB. Interacts with SYNCRIP. It depends on Zn(2+) as a cofactor. As to expression, expressed in the liver as well as small intestine.

Its subcellular location is the cytoplasm. It is found in the nucleus. The catalysed reaction is a cytidine in mRNA + H2O + H(+) = a uridine in mRNA + NH4(+). It carries out the reaction cytidine(6666) in apoB mRNA + H2O + H(+) = uridine(6666) in apoB mRNA + NH4(+). Cytidine deaminase catalyzing the cytidine to uridine postranscriptional editing of a variety of mRNAs. Form complexes with cofactors that confer differential editing activity and selectivity. Responsible for the postranscriptional editing of a CAA codon for Gln to a UAA codon for stop in the apolipoprotein B mRNA. Also involved in CGA (Arg) to UGA (Stop) editing in the NF1 mRNA. May also play a role in the epigenetic regulation of gene expression by participating in DNA demethylation. This is C-&gt;U-editing enzyme APOBEC-1 from Rattus norvegicus (Rat).